Consider the following 63-residue polypeptide: UPF0434 protein Sde_1297 (63 aa).

Belongs to the UPF0434 family.

The chain is UPF0434 protein Sde_1297 from Saccharophagus degradans (strain 2-40 / ATCC 43961 / DSM 17024).